The following is a 500-amino-acid chain: NAD(P)H-quinone oxidoreductase chain 4, chloroplastic (500 aa).

The next 14 helical transmembrane spans lie at 4 to 24, 37 to 57, 87 to 107, 113 to 130, 134 to 154, 167 to 187, 207 to 227, 242 to 262, 272 to 292, 305 to 325, 330 to 350, 386 to 406, 411 to 431, and 462 to 482; these read FPWL…IFFL, ICIC…HFQL, IGPI…AWPV, LFHF…GSFS, LLLF…LLSM, FILY…GIGL, IALE…KSPI, HYST…YGLV, AHSL…IYAA, IAYS…SITD, GAIL…FLAG, LALP…GIIT, FLMA…LTPI, and LFVS…PDFL.

The protein belongs to the complex I subunit 4 family.

It is found in the plastid. The protein resides in the chloroplast thylakoid membrane. It carries out the reaction a plastoquinone + NADH + (n+1) H(+)(in) = a plastoquinol + NAD(+) + n H(+)(out). The catalysed reaction is a plastoquinone + NADPH + (n+1) H(+)(in) = a plastoquinol + NADP(+) + n H(+)(out). This Carica papaya (Papaya) protein is NAD(P)H-quinone oxidoreductase chain 4, chloroplastic.